The chain runs to 304 residues: Protein BOBBER 1 (304 aa).

Residue A2 is modified to N-acetylalanine. Positions 54 to 106 (EDEIVVAVRAAKEKLKKAEKKKAEKESVKPVEKKAEKEIVKLVEKKVEKESVK) form a coiled coil. Residues 111–141 (ASSAEPIEVEKPKEEEEKKESGPIVPNKGNG) form a disordered region. The span at 118-131 (EVEKPKEEEEKKES) shows a compositional bias: basic and acidic residues. The CS domain maps to 142-231 (TDLENYSWIQ…DQMEWWKCCV (90 aa)).

In terms of tissue distribution, expressed in all seedling tissues with highest expression levels at the root tip.

The protein localises to the cytoplasm. Its subcellular location is the cytoplasmic granule. Functionally, small heat shock protein required for the establishment of auxin gradients and for patterning of the apical domain of the embryo. Involved in the specification of the cotyledon primordia. Also required for normal inflorescence and floral meristem function, normal developmental patterning and thermotolerance. Acts as a molecular chaperone. In Arabidopsis thaliana (Mouse-ear cress), this protein is Protein BOBBER 1 (BOB1).